A 1888-amino-acid chain; its full sequence is Protein mms22 (1888 aa).

Disordered regions lie at residues 12 to 34 (DSQD…RGNE), 151 to 258 (FSSD…ISSN), and 316 to 354 (RRKL…SRFD). Composition is skewed to polar residues over residues 13-32 (SQDS…SQRG), 212-227 (SNLN…SSTI), and 338-348 (SDNSISTPTPT).

The protein belongs to the MMS22 family.

The protein resides in the nucleus. Involved in protection against replication-dependent DNA damage. May act by restoring active replication forks, repairing unusual DNA structures, and/or preventing aberrant DNA rearrangement at arrested replication forks. In Schizosaccharomyces pombe (strain 972 / ATCC 24843) (Fission yeast), this protein is Protein mms22 (mus7).